The chain runs to 124 residues: Ribonuclease pancreatic (124 aa).

Positions K1 to M13 are enriched in basic and acidic residues. Positions K1 to S22 are disordered. 2 residues coordinate substrate: K7 and R10. The Proton acceptor role is filled by H12. Disulfide bonds link C26–C84, C40–C95, C58–C110, and C65–C72. The N-linked (GlcNAc...) asparagine glycan is linked to N34. Residues K41–T45, K66, and R85 contribute to the substrate site. The Proton donor role is filled by H119.

The protein belongs to the pancreatic ribonuclease family. Monomer. Interacts with and forms tight 1:1 complexes with RNH1. Dimerization of two such complexes may occur. Interaction with RNH1 inhibits this protein. Pancreas.

The protein localises to the secreted. The catalysed reaction is an [RNA] containing cytidine + H2O = an [RNA]-3'-cytidine-3'-phosphate + a 5'-hydroxy-ribonucleotide-3'-[RNA].. It catalyses the reaction an [RNA] containing uridine + H2O = an [RNA]-3'-uridine-3'-phosphate + a 5'-hydroxy-ribonucleotide-3'-[RNA].. Functionally, endonuclease that catalyzes the cleavage of RNA on the 3' side of pyrimidine nucleotides. Acts on single-stranded and double-stranded RNA. This Bison bison (American bison) protein is Ribonuclease pancreatic (RNASE1).